The following is a 169-amino-acid chain: Centrosomal protein 20 (169 aa).

A necessary and sufficient for homooligomerization and localization to centrosomes and pericentriolar satellites region spans residues Met-1–Val-104. The region spanning Glu-49–Glu-81 is the LisH domain. A disordered region spans residues Thr-135 to Arg-169. Positions Gly-151–Thr-160 are enriched in polar residues.

It belongs to the CEP43 family. Homooligomer; probably required for localization to centrosomes.

It is found in the cell projection. The protein localises to the cilium. The protein resides in the cytoplasm. Its subcellular location is the cytoskeleton. It localises to the cilium basal body. It is found in the microtubule organizing center. The protein localises to the centrosome. The protein resides in the cytoplasmic granule. Its subcellular location is the centriolar satellite. Functionally, involved in the biogenesis of cilia. Required for the recruitment of PLK1 to centrosomes and S phase progression. This is Centrosomal protein 20 (Cep20) from Xenopus laevis (African clawed frog).